The primary structure comprises 162 residues: Phosphopantetheine adenylyltransferase (162 aa).

Threonine 9 is a binding site for substrate. ATP is bound by residues threonine 9 to phenylalanine 10 and histidine 17. 3 residues coordinate substrate: lysine 41, leucine 77, and arginine 91. Residues glycine 92–arginine 94, glutamate 102, and arginine 127–lysine 133 each bind ATP.

Belongs to the bacterial CoaD family. As to quaternary structure, homohexamer. Mg(2+) is required as a cofactor.

Its subcellular location is the cytoplasm. The enzyme catalyses (R)-4'-phosphopantetheine + ATP + H(+) = 3'-dephospho-CoA + diphosphate. It participates in cofactor biosynthesis; coenzyme A biosynthesis; CoA from (R)-pantothenate: step 4/5. Functionally, reversibly transfers an adenylyl group from ATP to 4'-phosphopantetheine, yielding dephospho-CoA (dPCoA) and pyrophosphate. The protein is Phosphopantetheine adenylyltransferase of Cereibacter sphaeroides (strain ATCC 17029 / ATH 2.4.9) (Rhodobacter sphaeroides).